A 207-amino-acid polypeptide reads, in one-letter code: Protein dct-5 (207 aa).

A helical transmembrane segment spans residues 13-33 (LNFILSIMNSYLFVLIVSIGF).

The protein resides in the membrane. Functionally, acts downstream of daf-16/foxo to suppress tumors induced by disruption of gld-1. Potentially a direct target of daf-15/foxo. The sequence is that of Protein dct-5 (dct-5) from Caenorhabditis elegans.